The sequence spans 714 residues: Fatty acid oxidation complex subunit alpha (714 aa).

The tract at residues 1–190 is enoyl-CoA hydratase; the sequence is MDMTSAFTLN…KSGLVDEIVP (190 aa). A 3-hydroxyacyl-CoA dehydrogenase region spans residues 306–714; the sequence is GTLDSIGILG…FWKTSATDRH (409 aa).

This sequence in the N-terminal section; belongs to the enoyl-CoA hydratase/isomerase family. In the central section; belongs to the 3-hydroxyacyl-CoA dehydrogenase family. As to quaternary structure, heterotetramer of two alpha chains (FadJ) and two beta chains (FadI).

The protein localises to the cytoplasm. The enzyme catalyses a (3S)-3-hydroxyacyl-CoA = a (2E)-enoyl-CoA + H2O. It catalyses the reaction a 4-saturated-(3S)-3-hydroxyacyl-CoA = a (3E)-enoyl-CoA + H2O. The catalysed reaction is a (3S)-3-hydroxyacyl-CoA + NAD(+) = a 3-oxoacyl-CoA + NADH + H(+). It carries out the reaction (3S)-3-hydroxybutanoyl-CoA = (3R)-3-hydroxybutanoyl-CoA. It functions in the pathway lipid metabolism; fatty acid beta-oxidation. Functionally, catalyzes the formation of a hydroxyacyl-CoA by addition of water on enoyl-CoA. Also exhibits 3-hydroxyacyl-CoA epimerase and 3-hydroxyacyl-CoA dehydrogenase activities. The sequence is that of Fatty acid oxidation complex subunit alpha from Escherichia fergusonii (strain ATCC 35469 / DSM 13698 / CCUG 18766 / IAM 14443 / JCM 21226 / LMG 7866 / NBRC 102419 / NCTC 12128 / CDC 0568-73).